Consider the following 276-residue polypeptide: U6 snRNA phosphodiesterase 1 (276 aa).

A disordered region spans residues 1–58 (MIVNYSSSSSEEESGSSSSPSGKRQKLDTETSEALDHGSAQRKVCKSSHLTPRLPLPE). The active-site Proton acceptor is the histidine 131. AMP is bound by residues 131 to 133 (HLS), tyrosine 213, and 215 to 221 (DPSFHIS). UMP is bound by residues tyrosine 213 and 217–221 (SFHIS). The active-site Proton donor is histidine 219.

Belongs to the 2H phosphoesterase superfamily. USB1 family.

It localises to the nucleus. It catalyses the reaction a 3'-end uridylyl-uridine-RNA = a 3'-end 2',3'-cyclophospho-uridine-RNA + uridine. The enzyme catalyses a 3'-end uridylyl-adenosine-RNA = a 3'-end 2',3'-cyclophospho-uridine-RNA + adenosine. Its function is as follows. 3'-5' RNA exonuclease that trims the 3' end of oligo(U) and oligo(A) tracts of the pre-U6 small nuclear RNA (snRNA) molecule, leading to the formation of a mature U6 snRNA 3' end-terminated with a 2',3'-cyclic phosphate. Participates in the U6 snRNA 3' end processing that prevents U6 snRNA degradation. In addition also removes uridines from the 3' end of U6atac snRNA and possibly the vault RNA VTRNA1-1. This chain is U6 snRNA phosphodiesterase 1, found in Danio rerio (Zebrafish).